The following is a 590-amino-acid chain: Leucine-rich repeat transmembrane neuronal protein 4 (590 aa).

Positions 1 to 30 (MGFHLITQLKGMSVVLVLLPTLLLVMLTGA) are cleaved as a signal peptide. Positions 31 to 61 (QRACPKNCRCDGKIVYCESHAFADIPENISG) constitute an LRRNT domain. The Extracellular portion of the chain corresponds to 31 to 424 (QRACPKNCRC…QEYEHVSFHK (394 aa)). Asparagine 58 carries N-linked (GlcNAc...) asparagine glycosylation. LRR repeat units lie at residues 62-83 (GSQG…QFAG), 86-107 (QLIW…AFQG), 110-131 (RLKE…TFHP), 134-155 (NLRN…QFKG), 158-179 (KLII…VFQD), 182-203 (NLDF…AFAG), 206-226 (KLKE…AHFP), 230-251 (NLRS…LTWT), 254-275 (SLHN…TFKC), and 278-299 (NLQK…TVNA). N-linked (GlcNAc...) asparagine glycosylation is present at asparagine 126. The N-linked (GlcNAc...) asparagine glycan is linked to asparagine 291. The region spanning 311–362 (NMWECSRSICPLFYWLKNFKGNKESTMICAGPKHIQGEKVSDAVETYNICSE) is the LRRCT domain. The chain crosses the membrane as a helical span at residues 425 to 445 (IIAGSVALFLSVAMILLVIYV). At 446 to 590 (SWKRYPASMK…PAIYLERIAN (145 aa)) the chain is on the cytoplasmic side.

The protein belongs to the LRRTM family. In terms of assembly, peripherally associated with AMPAR complex. AMPAR complex consists of an inner core made of 4 pore-forming GluA/GRIA proteins (GRIA1, GRIA2, GRIA3 and GRIA4) and 4 major auxiliary subunits arranged in a twofold symmetry. One of the two pairs of distinct binding sites is occupied either by CNIH2, CNIH3 or CACNG2, CACNG3. The other harbors CACNG2, CACNG3, CACNG4, CACNG8 or GSG1L. This inner core of AMPAR complex is complemented by outer core constituents binding directly to the GluA/GRIA proteins at sites distinct from the interaction sites of the inner core constituents. Outer core constituents include at least PRRT1, PRRT2, CKAMP44/SHISA9, FRRS1L and NRN1. The proteins of the inner and outer core serve as a platform for other, more peripherally associated AMPAR constituents, including LRRTM4. Alone or in combination, these auxiliary subunits control the gating and pharmacology of the AMPAR complex and profoundly impact their biogenesis and protein processing. Expressed in neuronal tissues.

Its subcellular location is the cell membrane. The protein localises to the postsynaptic cell membrane. Functionally, may play a role in the development and maintenance of the vertebrate nervous system. Exhibits strong synaptogenic activity, restricted to excitatory presynaptic differentiation. This chain is Leucine-rich repeat transmembrane neuronal protein 4 (LRRTM4), found in Homo sapiens (Human).